A 307-amino-acid chain; its full sequence is Ornithine carbamoyltransferase (307 aa).

Residues 50 to 53 (STRT), Gln77, Arg101, and 128 to 131 (HPCQ) each bind carbamoyl phosphate. Residues Asn160, Asp224, and 228–229 (SM) each bind L-ornithine. Carbamoyl phosphate-binding positions include 264-265 (CL) and Arg292.

Belongs to the aspartate/ornithine carbamoyltransferase superfamily. OTCase family.

The protein resides in the cytoplasm. It catalyses the reaction carbamoyl phosphate + L-ornithine = L-citrulline + phosphate + H(+). The protein operates within amino-acid biosynthesis; L-arginine biosynthesis; L-arginine from L-ornithine and carbamoyl phosphate: step 1/3. In terms of biological role, reversibly catalyzes the transfer of the carbamoyl group from carbamoyl phosphate (CP) to the N(epsilon) atom of ornithine (ORN) to produce L-citrulline. This Mycolicibacterium gilvum (strain PYR-GCK) (Mycobacterium gilvum (strain PYR-GCK)) protein is Ornithine carbamoyltransferase.